Consider the following 99-residue polypeptide: VEVLLGASDGGLAFVPNSFEVSAGDTIVFKNNAGFPHNVVFDEDEIPSGVDAAKISMPEEDLLNAPGETYSVKLDAKGTYKFYCSPHQGAGMVGQVTVN.

The 99-residue stretch at 1 to 99 (VEVLLGASDG…AGMVGQVTVN (99 aa)) folds into the Plastocyanin-like domain. H37, C84, H87, and M92 together coordinate Cu cation.

The protein belongs to the plastocyanin family. It depends on Cu(2+) as a cofactor.

The protein localises to the plastid. It localises to the chloroplast thylakoid membrane. Participates in electron transfer between P700 and the cytochrome b6-f complex in photosystem I. This Vicia faba (Broad bean) protein is Plastocyanin (PETE).